Consider the following 302-residue polypeptide: Ornithine carbamoyltransferase (302 aa).

Residues 52–55 (STRT), Gln-79, Arg-103, and 130–133 (HPCQ) contribute to the carbamoyl phosphate site. Residues Asn-161, Asp-221, and 225–226 (SM) each bind L-ornithine. Carbamoyl phosphate is bound by residues 261–262 (CL) and Arg-289.

This sequence belongs to the aspartate/ornithine carbamoyltransferase superfamily. OTCase family.

The protein localises to the cytoplasm. It carries out the reaction carbamoyl phosphate + L-ornithine = L-citrulline + phosphate + H(+). Its pathway is amino-acid biosynthesis; L-arginine biosynthesis; L-arginine from L-ornithine and carbamoyl phosphate: step 1/3. In terms of biological role, reversibly catalyzes the transfer of the carbamoyl group from carbamoyl phosphate (CP) to the N(epsilon) atom of ornithine (ORN) to produce L-citrulline. The sequence is that of Ornithine carbamoyltransferase from Methanospirillum hungatei JF-1 (strain ATCC 27890 / DSM 864 / NBRC 100397 / JF-1).